Reading from the N-terminus, the 267-residue chain is tRNA pseudouridine synthase A (267 aa).

Asp51 acts as the Nucleophile in catalysis. Tyr109 contributes to the substrate binding site.

This sequence belongs to the tRNA pseudouridine synthase TruA family.

It carries out the reaction uridine(38/39/40) in tRNA = pseudouridine(38/39/40) in tRNA. Functionally, formation of pseudouridine at positions 38, 39 and 40 in the anticodon stem and loop of transfer RNAs. The sequence is that of tRNA pseudouridine synthase A from Methanothrix thermoacetophila (strain DSM 6194 / JCM 14653 / NBRC 101360 / PT) (Methanosaeta thermophila).